Reading from the N-terminus, the 118-residue chain is Basic phospholipase A2 nigroxin B (118 aa).

Intrachain disulfides connect C11/C70, C25/C117, C27/C43, C42/C98, C49/C91, C59/C84, and C77/C89. Residues Y26, G28, and G30 each contribute to the Ca(2+) site. Residue H46 is part of the active site. Residue D47 coordinates Ca(2+). Residue D92 is part of the active site.

It belongs to the phospholipase A2 family. Group I subfamily. D49 sub-subfamily. Ca(2+) is required as a cofactor. Expressed by the venom gland.

The protein localises to the secreted. It carries out the reaction a 1,2-diacyl-sn-glycero-3-phosphocholine + H2O = a 1-acyl-sn-glycero-3-phosphocholine + a fatty acid + H(+). Functionally, snake venom phospholipase A2 (PLA2) that has only a weak enzymatic activity. It has a myotoxic activity in vivo (dystrophic effect). PLA2 catalyzes the calcium-dependent hydrolysis of the 2-acyl groups in 3-sn-phosphoglycerides. This Micrurus nigrocinctus (Central American coral snake) protein is Basic phospholipase A2 nigroxin B.